We begin with the raw amino-acid sequence, 658 residues long: Structure-specific endonuclease subunit SLX1 (658 aa).

The region spanning 12–92 (PFYACYFLRS…AKPHLSRHLK (81 aa)) is the GIY-YIG domain. Disordered regions lie at residues 29-52 (YIGS…QGAY), 239-269 (GVAE…ETLP), 288-328 (PIPQ…NGVD), and 594-658 (TTSR…IDLT). Composition is skewed to basic and acidic residues over residues 308-324 (KLSD…HDAE) and 627-640 (SKID…DTKK). Over residues 641 to 652 (NTTQKAKSNETS) the composition is skewed to polar residues.

It belongs to the SLX1 family. In terms of assembly, forms a heterodimer with SLX4. A divalent metal cation serves as cofactor.

Its subcellular location is the nucleus. Its function is as follows. Catalytic subunit of the SLX1-SLX4 structure-specific endonuclease that resolves DNA secondary structures generated during DNA repair and recombination. Has endonuclease activity towards branched DNA substrates, introducing single-strand cuts in duplex DNA close to junctions with ss-DNA. The protein is Structure-specific endonuclease subunit SLX1 of Mycosarcoma maydis (Corn smut fungus).